Consider the following 120-residue polypeptide: MPVLLRAKAHGLVVTGKNLHYEGSLTLGRDIIEAAGFYPLEKVEVYNVTNGARFTTYVIPGRPGEVVLNGAAARLGEVGDVIIVAAYECVANPASHIATIAIFEGNKLKEVRKISLSDMY.

The active-site Schiff-base intermediate with substrate; via pyruvic acid is Ser24. Ser24 bears the Pyruvic acid (Ser) mark. Thr56 lines the substrate pocket. Tyr57 functions as the Proton donor in the catalytic mechanism. Substrate is bound at residue 70–72 (GAA).

Belongs to the PanD family. In terms of assembly, heterooctamer of four alpha and four beta subunits. Requires pyruvate as cofactor. Is synthesized initially as an inactive proenzyme, which is activated by self-cleavage at a specific serine bond to produce a beta-subunit with a hydroxyl group at its C-terminus and an alpha-subunit with a pyruvoyl group at its N-terminus.

Its subcellular location is the cytoplasm. It carries out the reaction L-aspartate + H(+) = beta-alanine + CO2. The protein operates within cofactor biosynthesis; (R)-pantothenate biosynthesis; beta-alanine from L-aspartate: step 1/1. Catalyzes the pyruvoyl-dependent decarboxylation of aspartate to produce beta-alanine. The chain is Aspartate 1-decarboxylase from Pyrobaculum islandicum (strain DSM 4184 / JCM 9189 / GEO3).